The chain runs to 353 residues: GTPase Obg (353 aa).

One can recognise an Obg domain in the interval 1-159 (MKFLDEAKVY…RWIWLRLKLI (159 aa)). The OBG-type G domain maps to 160-327 (ADAGLVGLPN…ALRALAAVIG (168 aa)). GTP-binding positions include 166-173 (GLPNAGKS), 191-195 (FTTLH), 212-215 (DIPG), 279-282 (NKID), and 308-310 (SGI). Mg(2+) contacts are provided by Ser-173 and Thr-193. The segment at 332–353 (SDKAKGAADNAANAEPWAPQDA) is disordered.

This sequence belongs to the TRAFAC class OBG-HflX-like GTPase superfamily. OBG GTPase family. Monomer. It depends on Mg(2+) as a cofactor.

Its subcellular location is the cytoplasm. An essential GTPase which binds GTP, GDP and possibly (p)ppGpp with moderate affinity, with high nucleotide exchange rates and a fairly low GTP hydrolysis rate. Plays a role in control of the cell cycle, stress response, ribosome biogenesis and in those bacteria that undergo differentiation, in morphogenesis control. This chain is GTPase Obg, found in Rhodopseudomonas palustris (strain HaA2).